The chain runs to 420 residues: MTLVEKILSKKVGYEVCAGDSIEVEVDLAMTHDGTTPLAYKALKEMSDSVWNPDKIVVAFDHNVPPNTVKAAEMQKLALEFVKRFGIKNFHKGGEGICHQILAENYVLPNMFVAGGDSHTCTHGAFGAFATGFGATDMAYIYATGETWIKVPKTIRVDIVGKNENVSAKDIVLRVCKEIGRRGATYMAIEYGGEVVKNMDMDGRLTLCNMAIEMGGKTGVIEADEITYDYLKKERGLSDEDIAKLKKERITVNRDEANYYKEIEIDITDMEEQVAVPHHPDNVKPISDVEGTEINQVFIGSCTNGRLSDLREAAKYLKGREVHKDVKLIVIPASKKVFLQALKEGIIDIFVKAGAMICTPGCGPCLGAHQGVLAEGEICLSTTNRNFKGRMGHINSYIYLASPKIAAISAVKGYITNKLD.

The [4Fe-4S] cluster site is built by Cys-302, Cys-362, and Cys-365.

It belongs to the aconitase/IPM isomerase family. LeuC type 2 subfamily. In terms of assembly, heterotetramer of 2 HacA and 2 HacB proteins. The cofactor is [4Fe-4S] cluster.

It catalyses the reaction (2R)-homocitrate = (2R,3S)-homoisocitrate. It carries out the reaction (2R)-homocitrate = cis-homoaconitate + H2O. The catalysed reaction is (2R,3S)-homoisocitrate = cis-homoaconitate + H2O. The enzyme catalyses cis-(homo)2aconitate + H2O = (2R,3S)-iso(homo)2citrate. It catalyses the reaction cis-(homo)3aconitate + H2O = (2R,3S)-iso(homo)3citrate. It carries out the reaction (R)-malate = maleate + H2O. The catalysed reaction is cis-aconitate + H2O = D-threo-isocitrate. The protein operates within organic acid metabolism; 2-oxosuberate biosynthesis. Functionally, component of a hydro-lyase with broad substrate specificity for cis-unsaturated tricarboxylic acids. Catalyzes both the reversible dehydration of (R)-homocitrate ((R)-2-hydroxybutane-1,2,4-tricarboxylate) to produce cis-homoaconitate ((Z)-but-1-ene-1,2,4-tricarboxylate), and its hydration to homoisocitrate ((1R,2S)-1-hydroxybutane-1,2,4-tricarboxylate). Is also able to hydrate the analogous longer chain substrates cis-homo(2)-aconitate, cis-homo(3)-aconitate, and even the non-physiological cis-homo(4)-aconitate with similar efficiency. These reactions are part of the biosynthesis pathway of coenzyme B. Can also catalyze the hydration of maleate to (R)-malate, and that of cis-aconitate. Cannot catalyze the hydration of citraconate and the dehydration of (S)-homocitrate, citramalate, 2-isopropylmalate, 3-isopropylmalate, citrate or threo-DL-isocitrate. The protein is Methanogen homoaconitase large subunit (hacA) of Methanocaldococcus jannaschii (strain ATCC 43067 / DSM 2661 / JAL-1 / JCM 10045 / NBRC 100440) (Methanococcus jannaschii).